We begin with the raw amino-acid sequence, 260 residues long: Carbonic anhydrase 3 (260 aa).

Residue A2 is modified to N-acetylalanine. The Alpha-carbonic anhydrase domain occupies 3 to 259; that stretch reads KEWGYADHNG…LKGRVVRASF (257 aa). A phosphoserine mark is found at S29, S43, S50, and S55. The interval 64–67 is involved in proton transfer; the sequence is RTCR. Position 73 is a phosphothreonine (T73). H94, H96, and H119 together coordinate Zn(2+). Y127 carries the post-translational modification Phosphotyrosine. Phosphothreonine occurs at positions 129 and 176. S-glutathionyl cysteine occurs at positions 182 and 187. 198 to 199 lines the substrate pocket; the sequence is TT. T216 is modified (phosphothreonine). S219 carries the phosphoserine modification.

This sequence belongs to the alpha-carbonic anhydrase family. The cofactor is Zn(2+). Post-translationally, S-thiolated both by thiol-disulfide exchange with glutathione disulfide and by oxyradical-initiated S-thiolation with reduced glutathione. In terms of processing, S-glutathionylated in hepatocytes under oxidative stress.

Its subcellular location is the cytoplasm. The catalysed reaction is hydrogencarbonate + H(+) = CO2 + H2O. With respect to regulation, inhibited by acetazolamide. Functionally, reversible hydration of carbon dioxide. In Equus caballus (Horse), this protein is Carbonic anhydrase 3 (CA3).